Reading from the N-terminus, the 43-residue chain is Protein PsbN (43 aa).

The chain crosses the membrane as a helical span at residues 5 to 27 (TFLSIFISAALLGITGYSIYTAF).

Belongs to the PsbN family.

Its subcellular location is the plastid. It localises to the cyanelle thylakoid membrane. Functionally, may play a role in photosystem I and II biogenesis. In Cyanophora paradoxa, this protein is Protein PsbN.